The following is an 84-amino-acid chain: Sulfur carrier protein TusA (84 aa).

Catalysis depends on C21, which acts as the Cysteine persulfide intermediate.

The protein belongs to the sulfur carrier protein TusA family.

The protein localises to the cytoplasm. In terms of biological role, sulfur carrier protein which probably makes part of a sulfur-relay system. This Pseudomonas syringae pv. syringae (strain B728a) protein is Sulfur carrier protein TusA.